We begin with the raw amino-acid sequence, 263 residues long: Putative hydro-lyase GK2103 (263 aa).

It belongs to the D-glutamate cyclase family.

The sequence is that of Putative hydro-lyase GK2103 from Geobacillus kaustophilus (strain HTA426).